The chain runs to 98 residues: NADH-ubiquinone oxidoreductase chain 4L (98 aa).

3 helical membrane passes run 1 to 21 (MSMV…GLLM), 29 to 49 (SLLC…VTIL), and 61 to 81 (IILL…LVMV).

Belongs to the complex I subunit 4L family. As to quaternary structure, core subunit of respiratory chain NADH dehydrogenase (Complex I) which is composed of 45 different subunits.

The protein localises to the mitochondrion inner membrane. The enzyme catalyses a ubiquinone + NADH + 5 H(+)(in) = a ubiquinol + NAD(+) + 4 H(+)(out). Functionally, core subunit of the mitochondrial membrane respiratory chain NADH dehydrogenase (Complex I) which catalyzes electron transfer from NADH through the respiratory chain, using ubiquinone as an electron acceptor. Part of the enzyme membrane arm which is embedded in the lipid bilayer and involved in proton translocation. The polypeptide is NADH-ubiquinone oxidoreductase chain 4L (MT-ND4L) (Halichoerus grypus (Gray seal)).